Here is a 187-residue protein sequence, read N- to C-terminus: Probable nicotinate-nucleotide adenylyltransferase (187 aa).

It belongs to the NadD family.

The catalysed reaction is nicotinate beta-D-ribonucleotide + ATP + H(+) = deamido-NAD(+) + diphosphate. It functions in the pathway cofactor biosynthesis; NAD(+) biosynthesis; deamido-NAD(+) from nicotinate D-ribonucleotide: step 1/1. Catalyzes the reversible adenylation of nicotinate mononucleotide (NaMN) to nicotinic acid adenine dinucleotide (NaAD). This Agrobacterium fabrum (strain C58 / ATCC 33970) (Agrobacterium tumefaciens (strain C58)) protein is Probable nicotinate-nucleotide adenylyltransferase.